A 232-amino-acid polypeptide reads, in one-letter code: Clarin-1 (232 aa).

The helical transmembrane segment at 8–28 (IIFCMAGVFSFACALGVVTAL) threads the bilayer. Residue Asn-48 is glycosylated (N-linked (GlcNAc...) asparagine). Transmembrane regions (helical) follow at residues 101–121 (IILFSMILVVLTMVGTAFFMY) and 135–155 (LGLYLVSFISGSCGCLVMILF). Asn-184 is a glycosylation site (N-linked (GlcNAc...) asparagine). A helical membrane pass occupies residues 186-206 (TTSFWVVFICFFVHFLNGLLI).

Belongs to the clarin family.

The protein resides in the cell membrane. Its function is as follows. May have a role in the excitatory ribbon synapse junctions between hair cells and cochlear ganglion cells and presumably also in analogous synapses within the retina. This is Clarin-1 (Clrn1) from Rattus norvegicus (Rat).